Reading from the N-terminus, the 414-residue chain is tRNA(Ile)-lysidine synthase (414 aa).

Residue 13-18 (SGGIDS) coordinates ATP.

This sequence belongs to the tRNA(Ile)-lysidine synthase family.

It localises to the cytoplasm. It carries out the reaction cytidine(34) in tRNA(Ile2) + L-lysine + ATP = lysidine(34) in tRNA(Ile2) + AMP + diphosphate + H(+). In terms of biological role, ligates lysine onto the cytidine present at position 34 of the AUA codon-specific tRNA(Ile) that contains the anticodon CAU, in an ATP-dependent manner. Cytidine is converted to lysidine, thus changing the amino acid specificity of the tRNA from methionine to isoleucine. The protein is tRNA(Ile)-lysidine synthase of Thermotoga sp. (strain RQ2).